Reading from the N-terminus, the 384-residue chain is Prokineticin receptor 2 (384 aa).

The Extracellular segment spans residues 1–53 (MAAQNGNASFPANFSIPQEHASSLPFNFSYDDYDLPLDEDEDMTKTQTFFAAK). 3 N-linked (GlcNAc...) asparagine glycosylation sites follow: Asn-7, Asn-13, and Asn-27. The chain crosses the membrane as a helical span at residues 54 to 74 (IVIGVALVGIMLTCGIGNFVF). At 75–89 (ITALTRYKKLRNLTN) the chain is on the cytoplasmic side. The chain crosses the membrane as a helical span at residues 90–110 (LLIANLAISDFLVAIICCPFE). Over 111–137 (MDYYVVHQLSWEHGHVLCACINYLRTV) the chain is Extracellular. A disulfide bond links Cys-128 and Cys-208. A helical membrane pass occupies residues 138–158 (SLYVSTNALLAIAIDRYLAIV). Topologically, residues 159-171 (HPLKPRMNYQTAS) are cytoplasmic. The helical transmembrane segment at 172–192 (FLIALVWMVSILISIPSAYFT) threads the bilayer. Over 193-223 (KETVLFIVKNQKKIFCGQVWPVDQQLYYKSY) the chain is Extracellular. The helical transmembrane segment at 224 to 244 (FLFVFGIEFLGPVFTMTLCYA) threads the bilayer. Topologically, residues 245–273 (RISRELWFKAVPGFQTEQIRKRLRCRRKT) are cytoplasmic. A helical membrane pass occupies residues 274 to 294 (VLVLMCILTAYVLCWAPFYGF). Residues 295–313 (TIVRDFFPTVFVKEKHYLT) are Extracellular-facing. The chain crosses the membrane as a helical span at residues 314–334 (AFYVVECIAMSNSMINTVCFV). Topologically, residues 335–384 (TVKNSTMKYFKKMLLLHWRPSHHGSKSSADLDLKTSRLPATEEVDCIRLK) are cytoplasmic.

It belongs to the G-protein coupled receptor 1 family. Homodimer.

The protein resides in the cell membrane. Receptor for prokineticin 2. Exclusively coupled to the G(q) subclass of heteromeric G proteins. Activation leads to mobilization of calcium, stimulation of phosphoinositide turnover and activation of p44/p42 mitogen-activated protein kinase. This is Prokineticin receptor 2 (PROKR2) from Bos taurus (Bovine).